We begin with the raw amino-acid sequence, 638 residues long: Exotoxin A (638 aa).

The first 25 residues, 1-25, serve as a signal peptide directing secretion; the sequence is MHLTPHWIPLVASLGLLAGGSFASA. Residues 26-277 are domain Ia (required for target cell recognition); sequence AEEAFDLWNE…VISHRLHFPE (252 aa). The II (required for translocation in target cell cytoplasm) stretch occupies residues 278 to 389; that stretch reads GGSLAALTAH…TGNDEAGAAS (112 aa). Cysteines 290 and 312 form a disulfide. The domain Ib stretch occupies residues 390 to 429; the sequence is ADVVSLTCPVAAGECAGPADSGDALLERNYPTGAEFLGDG. An III (required for ADP-ribosyl activity) region spans residues 430–638; sequence GDISFSTRGT…PGKPPREDLK (209 aa). NAD(+)-binding positions include 465–467, S474, 479–485, and E578; these read HGT and GVRARSQ. Residue E578 is part of the active site. The segment at 596-638 is disordered; that stretch reads IPTDPRNVGGDLDPSSIPDKEQAISALPDYASQPGKPPREDLK.

In terms of processing, the 8 cysteines participate in intrachain disulfide bonds.

It carries out the reaction diphthamide-[translation elongation factor 2] + NAD(+) = N-(ADP-D-ribosyl)diphthamide-[translation elongation factor 2] + nicotinamide + H(+). Its activity is regulated as follows. Inhibited by 1,8-naphthalimide (NAP) as well as a number of poly(ADP-ribose) polymerase inhibitors and other compounds. In terms of biological role, an NAD-dependent ADP-ribosyltransferase (ADPRT). Catalyzes the transfer of the ADP ribosyl moiety of oxidized NAD (NAD(+)) onto eukaryotic elongation factor 2 (eEF-2) thus arresting protein synthesis. Has an LD(50) of 65 ng/ml against the human lung epithelial cell line C38. This chain is Exotoxin A, found in Pseudomonas aeruginosa (strain ATCC 15692 / DSM 22644 / CIP 104116 / JCM 14847 / LMG 12228 / 1C / PRS 101 / PAO1).